Consider the following 356-residue polypeptide: Ornithine cyclodeaminase (356 aa).

L-ornithine contacts are provided by R53 and K77. NAD(+)-binding positions include T92, R120, 147–148 (AQ), D169, T209, 232–235 (VGGD), K239, and S300. R120 lines the L-ornithine pocket. D235 provides a ligand contact to L-ornithine. D235 acts as the Proton donor/acceptor in catalysis. V301 lines the L-ornithine pocket.

The protein belongs to the ornithine cyclodeaminase/mu-crystallin family. It depends on NAD(+) as a cofactor.

The enzyme catalyses L-ornithine = L-proline + NH4(+). It participates in amino-acid biosynthesis; L-proline biosynthesis; L-proline from L-ornithine: step 1/1. With respect to regulation, is inhibited by L-proline and L-lysine. Is not activated by small concentrations of L-arginine, and is even inhibited by about 50% at 0.5 mM L-arginine. Its function is as follows. Catalyzes the conversion of L-ornithine into L-proline with release of ammonia. Is involved in the utilization of octopine, a catabolic pathway that proceeds through L-arginine and L-ornithine to L-proline. Octopine is a predominant opine in plant cells transformed with Ti plasmid pTiAch5. In Agrobacterium tumefaciens (strain Ach5), this protein is Ornithine cyclodeaminase.